Reading from the N-terminus, the 382-residue chain is Alkane 1-monooxygenase 1 (382 aa).

4 consecutive transmembrane segments (helical) span residues 10–30, 43–63, 90–110, and 121–141; these read MLAI…SMPF, FWAF…DMLF, LATV…FVAF, and WILS…HELI. The Fe cation site is built by His-138 and His-142. A helical transmembrane segment spans residues 146-166; it reads ALEQAAGGILLAAVCYAGFKV. Residues His-168, His-172, and His-173 each coordinate Fe cation. Residues 236-256 traverse the membrane as a helical segment; the sequence is LALLVGFGWAFGWLGMVFFLG. 3 residues coordinate Fe cation: His-312, His-315, and His-316.

It belongs to the fatty acid desaturase type 1 family. AlkB subfamily. Fe(3+) serves as cofactor.

The protein resides in the cell inner membrane. It carries out the reaction octane + 2 reduced [rubredoxin] + O2 + 2 H(+) = 2 oxidized [rubredoxin] + octan-1-ol + H2O. The protein operates within hydrocarbon metabolism; alkane degradation. Catalyzes the hydroxylation of n-alkanes in the presence of a NADH-rubredoxin reductase and rubredoxin. It preferably hydroxylases C16-C24 hydrocarbons. The sequence is that of Alkane 1-monooxygenase 1 (alkB1) from Pseudomonas aeruginosa (strain ATCC 15692 / DSM 22644 / CIP 104116 / JCM 14847 / LMG 12228 / 1C / PRS 101 / PAO1).